The primary structure comprises 202 residues: Putative transposon Tn552 DNA-invertase bin3 (202 aa).

One can recognise a Resolvase/invertase-type recombinase catalytic domain in the interval 1-143; the sequence is MIIGYARVSS…QGIQVAKEKG (143 aa). Serine 9 serves as the catalytic O-(5'-phospho-DNA)-serine intermediate.

This sequence belongs to the site-specific recombinase resolvase family.

In terms of biological role, potential DNA invertase. This chain is Putative transposon Tn552 DNA-invertase bin3 (bin3), found in Staphylococcus aureus.